We begin with the raw amino-acid sequence, 220 residues long: Small ribosomal subunit protein eS8 (220 aa).

It belongs to the eukaryotic ribosomal protein eS8 family.

The sequence is that of Small ribosomal subunit protein eS8 (RPS8A) from Leishmania major.